Here is a 123-residue protein sequence, read N- to C-terminus: Fluoride-specific ion channel FluC (123 aa).

A run of 4 helical transmembrane segments spans residues 3-23 (IAWV…LSNA), 34-54 (WGTL…FYLF), 67-87 (LVLV…LETL), and 99-119 (LLNM…GLVV). Na(+) is bound by residues glycine 74 and threonine 77.

The protein belongs to the fluoride channel Fluc/FEX (TC 1.A.43) family.

The protein resides in the cell inner membrane. The catalysed reaction is fluoride(in) = fluoride(out). Its activity is regulated as follows. Na(+) is not transported, but it plays an essential structural role and its presence is essential for fluoride channel function. Its function is as follows. Fluoride-specific ion channel. Important for reducing fluoride concentration in the cell, thus reducing its toxicity. The chain is Fluoride-specific ion channel FluC from Magnetococcus marinus (strain ATCC BAA-1437 / JCM 17883 / MC-1).